A 346-amino-acid chain; its full sequence is Calcium homeostasis modulator protein 1 (346 aa).

Topologically, residues 1–21 (MMDKFRMIFQFLQSNQESFMN) are cytoplasmic. The segment at 10-37 (QFLQSNQESFMNGICGIMALASAQMYSA) is central pore. Residues 22-37 (GICGIMALASAQMYSA) form a helical membrane-spanning segment. Over 38-49 (FDFNCPCLPGYN) the chain is Extracellular. 2 cysteine pairs are disulfide-bonded: cysteine 42–cysteine 127 and cysteine 44–cysteine 161. A helical transmembrane segment spans residues 50 to 72 (AAYSAGILLAPPLVLFLLGLVMN). Residues 63-70 (VLFLLGLV) form a phospholipid-binding region. Topologically, residues 73-99 (NNVSMLAEEWKRPLGRRAKDPAVLRYM) are cytoplasmic. Residues 100-125 (FCSMAQRALIAPVVWVAVTLLDGKCF) form a helical membrane-spanning segment. Residue cysteine 101 is the site of S-palmitoyl cysteine attachment. Residues 105 to 117 (QRALIAPVVWVAV) form a phospholipid-binding region. Over 126–180 (LCAFCTAVPVSALGNGSLAPGLPAPELARLLARVPCPEIYDGDWLLAREVAVRYL) the chain is Extracellular. Asparagine 140 is a glycosylation site (N-linked (GlcNAc...) asparagine). Residues 181–206 (RCISQALGWSFVLLTTLLAFVVRSVR) form a helical membrane-spanning segment. The interval 192 to 202 (VLLTTLLAFVV) is phospholipid-binding. Topologically, residues 207 to 346 (PCFTQAAFLK…KEVATYFSKV (140 aa)) are cytoplasmic. Cysteine 208 carries S-palmitoyl cysteine lipidation. The interval 313 to 346 (LRLGQEEPPLMGNGWAGGGPRPPRKEVATYFSKV) is disordered.

This sequence belongs to the CALHM family. In terms of assembly, oligomerizes to form hexamers and octamers. Does not form gap junctions. Associates with CALHM3 as a pore-forming subunit in a hetero-hexameric channel complex. Post-translationally, N-glycosylated. Assembly with CALHM3 is associated with N-glycan remodeling and formation of hybrid complex- and high mannose-type glycochains. This N-glycan processing regulates channel trafficking and gating kinetics. In terms of processing, palmitoylated by ZDHHC3, ZDHHC20 and possibly ZDHHC7. Palmitoylation regulates voltage-dependent gating of the channel by shifting it toward more depolarized potentials. In terms of tissue distribution, predominantly expressed in adult brain. Detected also in retinoic acid-differentiated SH-SY5Y cells. Specifically expressed in circumvallate taste bud cells.

Its subcellular location is the cell membrane. It localises to the endoplasmic reticulum membrane. The protein resides in the basolateral cell membrane. It catalyses the reaction ATP(in) = ATP(out). It carries out the reaction Ca(2+)(in) = Ca(2+)(out). The catalysed reaction is Mg(2+)(in) = Mg(2+)(out). The enzyme catalyses Na(+)(in) = Na(+)(out). It catalyses the reaction K(+)(in) = K(+)(out). It carries out the reaction Li(+)(in) = Li(+)(out). The catalysed reaction is Rb(+)(in) = Rb(+)(out). The enzyme catalyses Cs(+)(in) = Cs(+)(out). It catalyses the reaction chloride(in) = chloride(out). Its activity is regulated as follows. Regulated by membrane voltage and extracellular Ca(2+). Inhibited by Gd(3+), ruthenium red, and Zn(2+) and partially inhibited by 2-aminoethoxydiphenyl borate. Pore-forming subunit of gustatory voltage-gated ion channels required for sensory perception of sweet, bitter and umami tastes. With CALHM3 forms a fast-activating voltage-gated ATP-release channel in type II taste bud cells, ATP acting as a neurotransmitter to activate afferent neural gustatory pathways. Acts both as a voltage-gated and calcium-activated ion channel: mediates neuronal excitability in response to membrane depolarization and low extracellular Ca(2+) concentration. Has poor ion selectivity and forms a wide pore (around 14 Angstroms) that mediates permeation of small ions including Ca(2+), Na(+), K(+) and Cl(-), as well as larger ions such as ATP(4-). Mediates Ca(2+) influx and downstream activation of the ERK1 and ERK2 cascade in neurons. Triggers endoplasmic reticulum stress by reducing the Ca(2+) content of the endoplasmic reticulum. May indirectly control amyloid precursor protein (APP) proteolysis and aggregated amyloid-beta (Abeta) peptides levels in a Ca(2+)-dependent manner. This is Calcium homeostasis modulator protein 1 from Homo sapiens (Human).